The primary structure comprises 132 residues: Ribosome-binding factor A (132 aa).

It belongs to the RbfA family. As to quaternary structure, monomer. Binds 30S ribosomal subunits, but not 50S ribosomal subunits or 70S ribosomes.

It is found in the cytoplasm. In terms of biological role, one of several proteins that assist in the late maturation steps of the functional core of the 30S ribosomal subunit. Associates with free 30S ribosomal subunits (but not with 30S subunits that are part of 70S ribosomes or polysomes). Required for efficient processing of 16S rRNA. May interact with the 5'-terminal helix region of 16S rRNA. The protein is Ribosome-binding factor A of Pectobacterium carotovorum subsp. carotovorum (strain PC1).